A 277-amino-acid chain; its full sequence is Large ribosomal subunit protein uL2 (277 aa).

2 disordered regions span residues 34 to 55 and 213 to 277; these read LQPLPKKAGRNNQGKLTVRHHG and WKGI…RKKK.

It belongs to the universal ribosomal protein uL2 family. Part of the 50S ribosomal subunit. Forms a bridge to the 30S subunit in the 70S ribosome.

One of the primary rRNA binding proteins. Required for association of the 30S and 50S subunits to form the 70S ribosome, for tRNA binding and peptide bond formation. It has been suggested to have peptidyltransferase activity; this is somewhat controversial. Makes several contacts with the 16S rRNA in the 70S ribosome. In Staphylococcus haemolyticus (strain JCSC1435), this protein is Large ribosomal subunit protein uL2.